Reading from the N-terminus, the 249-residue chain is Proteasome subunit alpha type-7 (249 aa).

Belongs to the peptidase T1A family. In terms of assembly, the 26S proteasome consists of a 20S proteasome core and two 19S regulatory subunits. The 20S proteasome core is composed of 28 subunits that are arranged in four stacked rings, resulting in a barrel-shaped structure. The two end rings are each formed by seven alpha subunits, and the two central rings are each formed by seven beta subunits. The catalytic chamber with the active sites is on the inside of the barrel.

It localises to the cytoplasm. The protein resides in the nucleus. Functionally, the proteasome is a multicatalytic proteinase complex which is characterized by its ability to cleave peptides with Arg, Phe, Tyr, Leu, and Glu adjacent to the leaving group at neutral or slightly basic pH. The proteasome has an ATP-dependent proteolytic activity. The protein is Proteasome subunit alpha type-7 (PAD1) of Cicer arietinum (Chickpea).